We begin with the raw amino-acid sequence, 248 residues long: uncharacterized protein (248 aa).

A helical membrane pass occupies residues 30–50 (LIALAIFIGLIAIFMFGCKAA). Disordered stretches follow at residues 59–91 (NRDT…MDPP) and 208–248 (TTES…VSTR). Composition is skewed to polar residues over residues 210–220 (ESPAPAQSTSN) and 239–248 (SLHNETVSTR).

It is found in the membrane. This is an uncharacterized protein from Caenorhabditis elegans.